We begin with the raw amino-acid sequence, 487 residues long: Serine/threonine-protein kinase 4 (487 aa).

Position 1 is an N-acetylmethionine (M1). T3 is modified (phosphothreonine). One can recognise a Protein kinase domain in the interval F30–V281. Residues L36–V44 and K59 each bind ATP. D149 (proton acceptor) is an active-site residue. T183 bears the Phosphothreonine; by autocatalysis mark. S265 bears the Phosphoserine mark. A coiled-coil region spans residues I289–E311. A disordered region spans residues Q305–A334. Acidic residues predominate over residues D313–D326. Phosphoserine is present on S320. Phosphothreonine occurs at positions 340 and 367. A Phosphothreonine; by PKB/AKT1 modification is found at T387. The residue at position 410 (S410) is a Phosphoserine. Y433 bears the Phosphotyrosine mark. The SARAH domain occupies Y433 to K480.

This sequence belongs to the protein kinase superfamily. STE Ser/Thr protein kinase family. STE20 subfamily. In terms of assembly, homodimer; mediated via the coiled-coil region. Interacts with NORE1, which inhibits autoactivation. Interacts with and stabilizes SAV1. Interacts with RASSF1. Interacts with FOXO3. Interacts with RASSF2 (via SARAH domain). Interacts with AR, PKB/AKT1, TNNI3 and SIRT1. Interacts with MARK3 and SCRIB in the presence of DLG5. Interacts with DLG5 (via PDZ domain 3). Requires Mg(2+) as cofactor. Post-translationally, autophosphorylated on serine and threonine residues. Phosphorylation at Thr-387 by PKB/AKT1, leads to inhibition of its: kinase activity, nuclear translocation and autophosphorylation at Thr-183. It also diminishes its cleavage by caspases and its ability to phosphorylate FOXO3. Proteolytically cleaved by caspase-3 during apoptosis at Asp-326 resulting in a 37 kDa form. Proteolytic cleavage results in kinase activation and nuclear translocation of the truncated form (MST1/N).

It localises to the cytoplasm. It is found in the nucleus. It carries out the reaction L-seryl-[protein] + ATP = O-phospho-L-seryl-[protein] + ADP + H(+). It catalyses the reaction L-threonyl-[protein] + ATP = O-phospho-L-threonyl-[protein] + ADP + H(+). Its activity is regulated as follows. Inhibited by the C-terminal non-catalytic region. Activated by caspase-cleavage. Full activation also requires homodimerization and autophosphorylation of Thr-183. Activated by RASSF1 which acts by preventing its dephosphorylation. Its function is as follows. Stress-activated, pro-apoptotic kinase which, following caspase-cleavage, enters the nucleus and induces chromatin condensation followed by internucleosomal DNA fragmentation. Key component of the Hippo signaling pathway which plays a pivotal role in organ size control and tumor suppression by restricting proliferation and promoting apoptosis. The core of this pathway is composed of a kinase cascade wherein STK3/MST2 and STK4/MST1, in complex with its regulatory protein SAV1, phosphorylates and activates LATS1/2 in complex with its regulatory protein MOB1, which in turn phosphorylates and inactivates YAP1 oncoprotein and WWTR1/TAZ. Phosphorylation of YAP1 by LATS2 inhibits its translocation into the nucleus to regulate cellular genes important for cell proliferation, cell death, and cell migration. STK3/MST2 and STK4/MST1 are required to repress proliferation of mature hepatocytes, to prevent activation of facultative adult liver stem cells (oval cells), and to inhibit tumor formation. Phosphorylates 'Ser-14' of histone H2B (H2BS14ph) during apoptosis. Phosphorylates FOXO3 upon oxidative stress, which results in its nuclear translocation and cell death initiation. Phosphorylates MOBKL1A, MOBKL1B and RASSF2. Phosphorylates TNNI3 (cardiac Tn-I) and alters its binding affinity to TNNC1 (cardiac Tn-C) and TNNT2 (cardiac Tn-T). Phosphorylates FOXO1 on 'Ser-212' and regulates its activation and stimulates transcription of PMAIP1 in a FOXO1-dependent manner. Phosphorylates SIRT1 and inhibits SIRT1-mediated p53/TP53 deacetylation, thereby promoting p53/TP53 dependent transcription and apoptosis upon DNA damage. Acts as an inhibitor of PKB/AKT1. Phosphorylates AR on 'Ser-650' and suppresses its activity by intersecting with PKB/AKT1 signaling and antagonizing formation of AR-chromatin complexes. The sequence is that of Serine/threonine-protein kinase 4 (Stk4) from Mus musculus (Mouse).